A 1045-amino-acid chain; its full sequence is MTDSDQSLKVLEELFKNLSVATADNRVEAAQEVASFLNGNIIEHDIPEKFFEELAKAVKDKKTSANFLEAVAHIANEANLSPSVEPFVITLVPEICAKAGDKDKDVQAVASKTLVAISKAINPVAIKAYLPHLTKSLETTNKWQEKVSVLAAISALVDAAKEQVALRMPELIPVLSETMWDTKKEVKEAATATMTKATETVDNKDIERFIPQLISCIADPKQVPETVHLLGATTFVAEVTPATLSIMVPLLSRGLAERETSIKRKAAVIIDNMCKLVEDPQVVAPFLDKLLPGLKNNYATIADPEAREVTLRGLKTLRRVGNVTEDDVLPEISHAGDIETTLGVINELLKGENVAPRFKIVVEYIAAMAGDLIDERVIDQQAWFTHITPYMTIFMHERNAKDVLDEFRKRAVDNIPVGPNFDDEEDEGEDLCNCEFSLAYGAKILLNKTQLRLKRGRRYGLCGPNGAGKSTLMRAIANGQVDGFPTPEECMTVYVEHDIDGTHADTSVLDFVVSSEVGTKEAITAKLVEFGFTEEMINMPISSLSGGWKMKLALARAVLKNADILLLDEPTNHLDTVNVAWLVNYLNTCGITSVIVSHDSGFLDNVCQYIIHYEGLKLRKYKGNLSEFVKKCPTAQSYYELGASDLEFKFPEPGYLEGVKTKQKAIVKVSNMTFQYPGTSKPQISDISFQCSLSSRIAVIGPNGAGKSTLINVLTGELLPTSGEVYTHENCRIAYIKQHAFAHIESHLDKTPSEYIQWRFQTGEDRETMDRANRQINENDAEAMNKIFKIEGTPRRIAGIHARRKFKNTYEYECSFLLGENIGMKSERWVPMMSVDNAWIPRGELVESHSKMVAEVDMKEALASGQFRPLTRKEIEEHCAMLGLDAELVSHSRIRGLSGGQKVKLVLAACSWQRPHLIVLDEPTNYLDRDSLGALSKALKAFEGGVIIITHSAEFTKNLTEEVWAVKDGKMTPSGHNWVSGQGAGPRIEKKEDEEDKFDAMGNKIAGGKKKKKLSSAELRKKKKERMKKKKELGDAYVSSDDEDF.

HEAT repeat units follow at residues 5–42 (DQSLKVLEELFKNLSVATADNRVEAAQEVASFLNGNII), 43–85 (EHDI…PSVE), 86–123 (PFVITLVPEICAKAGDKDKDVQAVASKTLVAISKAINP), 125–162 (AIKAYLPHLTKSLETTNKWQEKVSVLAAISALVDAAKE), 166–203 (LRMPELIPVLSETMWDTKKEVKEAATATMTKATETVDN), 205–241 (DIERFIPQLISCIADPKQVPETVHLLGATTFVAEVTP), and 242–279 (ATLSIMVPLLSRGLAERETSIKRKAAVIIDNMCKLVED). ADP-binding residues include I42, H44, and S83. Residues T392, H396, and E397 each coordinate ADP. ABC transporter domains are found at residues 426–641 (DEGE…YYEL) and 667–993 (VKVS…KKED). N703, E922, N925, and H951 together coordinate ADP. Positions 974–1045 (SGHNWVSGQG…AYVSSDDEDF (72 aa)) are disordered. Positions 1007–1031 (GGKKKKKLSSAELRKKKKERMKKKK) are enriched in basic residues.

This sequence belongs to the ABC transporter superfamily. ABCF family. EF3 subfamily. Monomer.

Its subcellular location is the cytoplasm. It localises to the cytosol. It catalyses the reaction ATP + H2O = ADP + phosphate + H(+). The protein operates within protein biosynthesis; polypeptide chain elongation. In terms of biological role, ribosome-dependent ATPase that functions in cytoplasmic translation elongation. Required for the ATP-dependent release of deacylated tRNA from the ribosomal E-site during protein biosynthesis. Stimulates the eEF1A-dependent binding of aminoacyl-tRNA to the ribosomal A-site, which has reduced affinity for tRNA as long as the E-site is occupied. Assists translation termination by stimulating the release of nascent protein from the ribosome by release factors. This Candida glabrata (strain ATCC 2001 / BCRC 20586 / JCM 3761 / NBRC 0622 / NRRL Y-65 / CBS 138) (Yeast) protein is Elongation factor 3 (TEF3).